The following is a 935-amino-acid chain: LPS-assembly protein LptD (935 aa).

Residues 1–33 form the signal peptide; the sequence is MALKSPAFRRKFPLLVTGGLLALQPLATSYVVA. Positions 52-85 are disordered; that stretch reads KTPVNNLPPRPVHEGAAVSSGTEAAGEAETADRP. A compositionally biased stretch (low complexity) spans 65 to 79; the sequence is EGAAVSSGTEAAGEA.

This sequence belongs to the LptD family. In terms of assembly, component of the lipopolysaccharide transport and assembly complex. Interacts with LptE and LptA.

It is found in the cell outer membrane. Its function is as follows. Together with LptE, is involved in the assembly of lipopolysaccharide (LPS) at the surface of the outer membrane. In Pseudomonas putida (strain ATCC 700007 / DSM 6899 / JCM 31910 / BCRC 17059 / LMG 24140 / F1), this protein is LPS-assembly protein LptD.